The sequence spans 319 residues: MKPENKLPVLDLISAEMKTVVNTLQPDLPSWPATGTIAEQRQYYTLERRFWNAGAPEMATRAYMVPTKYGQVETRLFCPQPDSPATLFYLHGGGFILGNLDTHDRIMRLLASYSQCTVIGINYTLSPEARFPQAIEEIVAACCYFHQQAEDYQINMSRIGFAGDSAGAMLALASALWLRDKQIDCGKIAGVLLWYGLYGLRDSVTRRLLGGVWDGLTQQDLQMYEEAYLSNDADRESPYYCLFNNDLTREVPPCFIAGAEFDPLLDDSRLLYQTLAAHQQPCEFKLYPGTLHAFLHYSRMMKTADEALRDGAQFFTAQL.

The Involved in the stabilization of the negatively charged intermediate by the formation of the oxyanion hole motif lies at 91-93; it reads HGG. Residues S165, D262, and H292 contribute to the active site.

The protein belongs to the 'GDXG' lipolytic enzyme family. As to quaternary structure, homodimer. Interacts with MalT and MelA.

The protein localises to the cytoplasm. Its function is as follows. Displays esterase activity towards short chain fatty esters (acyl chain length of up to 8 carbons). Able to hydrolyze triacetylglycerol (triacetin) and tributyrylglycerol (tributyrin), but not trioleylglycerol (triolein) or cholesterol oleate. Negatively regulates MalT activity by antagonizing maltotriose binding. Inhibits MelA galactosidase activity. The chain is Acetyl esterase from Shigella flexneri.